Consider the following 369-residue polypeptide: Anhydro-N-acetylmuramic acid kinase (369 aa).

12–19 (GTSLDGVD) is a binding site for ATP.

The protein belongs to the anhydro-N-acetylmuramic acid kinase family.

The catalysed reaction is 1,6-anhydro-N-acetyl-beta-muramate + ATP + H2O = N-acetyl-D-muramate 6-phosphate + ADP + H(+). The protein operates within amino-sugar metabolism; 1,6-anhydro-N-acetylmuramate degradation. It functions in the pathway cell wall biogenesis; peptidoglycan recycling. Its function is as follows. Catalyzes the specific phosphorylation of 1,6-anhydro-N-acetylmuramic acid (anhMurNAc) with the simultaneous cleavage of the 1,6-anhydro ring, generating MurNAc-6-P. Is required for the utilization of anhMurNAc either imported from the medium or derived from its own cell wall murein, and thus plays a role in cell wall recycling. The sequence is that of Anhydro-N-acetylmuramic acid kinase from Shigella boydii serotype 18 (strain CDC 3083-94 / BS512).